Reading from the N-terminus, the 109-residue chain is Staphostatin B (109 aa).

Residues 97–101 (IGTSR) are binds to staphopain B.

It belongs to the protease inhibitor I57 (SspC) family. Forms a stable non-covalent complex with prematurely activated/folded SspB.

It is found in the cytoplasm. Specifically inhibits the cysteine protease staphopain B (SspB) by blocking the active site of the enzyme. Probably required to protect cytoplasmic proteins from being degraded by prematurely activated/folded prostaphopain B. Also involved in growth capacity, viability and bacterial morphology. The chain is Staphostatin B (sspC) from Staphylococcus aureus (strain MRSA252).